The sequence spans 304 residues: tRNA pseudouridine synthase B (304 aa).

D48 (nucleophile) is an active-site residue.

The protein belongs to the pseudouridine synthase TruB family. Type 1 subfamily.

It catalyses the reaction uridine(55) in tRNA = pseudouridine(55) in tRNA. Its function is as follows. Responsible for synthesis of pseudouridine from uracil-55 in the psi GC loop of transfer RNAs. In Pseudomonas paraeruginosa (strain DSM 24068 / PA7) (Pseudomonas aeruginosa (strain PA7)), this protein is tRNA pseudouridine synthase B.